Consider the following 206-residue polypeptide: Probable GTP-binding protein EngB (206 aa).

The EngB-type G domain maps to 24 to 198 (QGREVAFAGR…HARLDEWLGL (175 aa)). Residues 32–39 (GRSNVGKS), 59–63 (GRTQL), 77–80 (DLPG), 144–147 (TKAD), and 177–179 (FSA) each bind GTP. Mg(2+) contacts are provided by S39 and T61.

The protein belongs to the TRAFAC class TrmE-Era-EngA-EngB-Septin-like GTPase superfamily. EngB GTPase family. Requires Mg(2+) as cofactor.

Necessary for normal cell division and for the maintenance of normal septation. The polypeptide is Probable GTP-binding protein EngB (Alkalilimnicola ehrlichii (strain ATCC BAA-1101 / DSM 17681 / MLHE-1)).